A 202-amino-acid polypeptide reads, in one-letter code: Matrix protein (202 aa).

A PPXY motif motif is present at residues 35–38; that stretch reads PPEY. The tract at residues 115-151 is essential for glycoprotein binding; sequence KLRRTFIFQWADSRGPLEGEELEYSQEITWDDDTEFV.

The protein belongs to the lyssavirus matrix protein family. In terms of assembly, homomultimer. Interacts with nucleoprotein and with the cytoplasmic domain of glycoprotein. Interacts with host ATP6V1A; this interaction plays an important role in virion uncoating after viral entry.

It is found in the virion membrane. The protein localises to the host endomembrane system. The protein resides in the host cytoplasm. Functionally, plays a major role in assembly, budding and uncoating of virion after membrane fusion. Completely covers the ribonucleoprotein coil and keep it in condensed bullet-shaped form. Inhibits viral transcription and stimulates replication. Plays a major role in early induction of TRAIL-mediated apoptosis in infected neurons. Inhibits the integrated stress response (ISR) in the infected cell by blocking the formation of stress granules. The polypeptide is Matrix protein (M) (Rabies virus (strain ERA) (RABV)).